The primary structure comprises 345 residues: Mariner Mos1 transposase (345 aa).

The tract at residues 1–112 (MSSFVPNKEQ…VSNRLREMGK (112 aa)) is DNA-binding. 2 DNA-binding regions (H-T-H motif) span residues 24 to 55 (TAAE…RFKS) and 89 to 110 (QKQL…LREM). A linker region spans residues 113 to 125 (IQKVGRWVPHELN). Residues 126–345 (ERQMERRKNT…CVASDGKYLE (220 aa)) form a catalytic region. Aspartate 156, aspartate 249, and aspartate 284 together coordinate Mg(2+).

Homodimer. The complex has a trans arrangement, with each transposon end recognized by the DNA binding region of one transposase monomer and by the active site of the other monomer. Requires Mg(2+) as cofactor. Mn(2+) is required as a cofactor.

It is found in the nucleus. Mediates transposition of transposon Mos1 by a 'cut and paste' mechanism. Transposases are sequence-specific nucleases and strand transferases that catalyze transposition through an ordered series of events: sequence-specific binding of transposase to the terminal inverted repeats (IR) present at each end of the transposon, pairing of the transposon IRs in a paired-end complex (PEC), cleavage of one or both DNA strands at each transposon end, capture of target DNA, and strand transfer to insert the transposon at a new site. This chain is Mariner Mos1 transposase (mariner\T), found in Drosophila mauritiana (Fruit fly).